A 253-amino-acid polypeptide reads, in one-letter code: Phosphonates import ATP-binding protein PhnC (253 aa).

Positions 4 to 247 (VRFEGVTKRF…QAVAMIYRAG (244 aa)) constitute an ABC transporter domain. 36–43 (GLSGSGKS) contacts ATP.

The protein belongs to the ABC transporter superfamily. Phosphonates importer (TC 3.A.1.9.1) family. As to quaternary structure, the complex is composed of two ATP-binding proteins (PhnC), two transmembrane proteins (PhnE) and a solute-binding protein (PhnD).

It localises to the cell membrane. The catalysed reaction is phosphonate(out) + ATP + H2O = phosphonate(in) + ADP + phosphate + H(+). Functionally, part of the ABC transporter complex PhnCDE involved in phosphonates import. Responsible for energy coupling to the transport system. The polypeptide is Phosphonates import ATP-binding protein PhnC (Frankia casuarinae (strain DSM 45818 / CECT 9043 / HFP020203 / CcI3)).